Here is a 427-residue protein sequence, read N- to C-terminus: Tol-Pal system protein TolB (427 aa).

A signal peptide spans Met-1–Ala-23.

This sequence belongs to the TolB family. As to quaternary structure, the Tol-Pal system is composed of five core proteins: the inner membrane proteins TolA, TolQ and TolR, the periplasmic protein TolB and the outer membrane protein Pal. They form a network linking the inner and outer membranes and the peptidoglycan layer.

The protein resides in the periplasm. In terms of biological role, part of the Tol-Pal system, which plays a role in outer membrane invagination during cell division and is important for maintaining outer membrane integrity. This chain is Tol-Pal system protein TolB, found in Actinobacillus succinogenes (strain ATCC 55618 / DSM 22257 / CCUG 43843 / 130Z).